A 476-amino-acid chain; its full sequence is Proline--tRNA ligase (476 aa).

Belongs to the class-II aminoacyl-tRNA synthetase family. ProS type 3 subfamily. In terms of assembly, homodimer.

Its subcellular location is the cytoplasm. It catalyses the reaction tRNA(Pro) + L-proline + ATP = L-prolyl-tRNA(Pro) + AMP + diphosphate. Catalyzes the attachment of proline to tRNA(Pro) in a two-step reaction: proline is first activated by ATP to form Pro-AMP and then transferred to the acceptor end of tRNA(Pro). The protein is Proline--tRNA ligase of Mycoplasmopsis pulmonis (strain UAB CTIP) (Mycoplasma pulmonis).